We begin with the raw amino-acid sequence, 310 residues long: MKPKIFIDGEHGTTGLQIRTRLAERDDLEVISIPEAERRNKDLRADYLRAADIAILCLPDDASKEAVSLLEGHNSTRIIDTSTAHRVHPDWAYGFAELAKGQRERIAEARLVANPGCYPTGAIALVRPLRDAGLLPADYPVSVNAVSGYTGGGKQLIAQMEDRNHPDYLAANNFLYGLPLKHKHVPELQLHGRLDRRPIFSPSVGRFPQGMIVQVPLFLSELEGSPSLAKVHAVLTEHYAGQDIVEVVPLEESAKLPRVDAEELAGKDGMKLFVFGTEDHGQVNLVALLDNLGKGASGAAVQNMNLMLGK.

C117 is an active-site residue.

This sequence belongs to the NAGSA dehydrogenase family. Type 2 subfamily.

It is found in the cytoplasm. It carries out the reaction N-acetyl-L-glutamate 5-semialdehyde + phosphate + NADP(+) = N-acetyl-L-glutamyl 5-phosphate + NADPH + H(+). The protein operates within amino-acid biosynthesis; L-arginine biosynthesis; N(2)-acetyl-L-ornithine from L-glutamate: step 3/4. Catalyzes the NADPH-dependent reduction of N-acetyl-5-glutamyl phosphate to yield N-acetyl-L-glutamate 5-semialdehyde. The polypeptide is N-acetyl-gamma-glutamyl-phosphate reductase (Brucella abortus (strain S19)).